Here is a 154-residue protein sequence, read N- to C-terminus: 6,7-dimethyl-8-ribityllumazine synthase (154 aa).

5-amino-6-(D-ribitylamino)uracil-binding positions include phenylalanine 22, alanine 56–glutamate 58, and alanine 80–isoleucine 82. Residue alanine 85–threonine 86 participates in (2S)-2-hydroxy-3-oxobutyl phosphate binding. Histidine 88 serves as the catalytic Proton donor. Phenylalanine 113 provides a ligand contact to 5-amino-6-(D-ribitylamino)uracil. Arginine 127 is a (2S)-2-hydroxy-3-oxobutyl phosphate binding site.

This sequence belongs to the DMRL synthase family. As to quaternary structure, forms an icosahedral capsid composed of 60 subunits, arranged as a dodecamer of pentamers.

The catalysed reaction is (2S)-2-hydroxy-3-oxobutyl phosphate + 5-amino-6-(D-ribitylamino)uracil = 6,7-dimethyl-8-(1-D-ribityl)lumazine + phosphate + 2 H2O + H(+). It functions in the pathway cofactor biosynthesis; riboflavin biosynthesis; riboflavin from 2-hydroxy-3-oxobutyl phosphate and 5-amino-6-(D-ribitylamino)uracil: step 1/2. Functionally, catalyzes the formation of 6,7-dimethyl-8-ribityllumazine by condensation of 5-amino-6-(D-ribitylamino)uracil with 3,4-dihydroxy-2-butanone 4-phosphate. This is the penultimate step in the biosynthesis of riboflavin. The polypeptide is 6,7-dimethyl-8-ribityllumazine synthase (Geobacillus sp. (strain WCH70)).